The primary structure comprises 146 residues: Large ribosomal subunit protein uL15 (146 aa).

Residues 1–54 (MTIKLHDLRPAPGSKTPRTRVGRGEGSKGKTAGRGTKGTKARKQVPTTFEGGQM) are disordered.

Belongs to the universal ribosomal protein uL15 family. As to quaternary structure, part of the 50S ribosomal subunit.

Functionally, binds to the 23S rRNA. The chain is Large ribosomal subunit protein uL15 from Mycobacterium ulcerans (strain Agy99).